An 87-amino-acid chain; its full sequence is Small ribosomal subunit protein bS20 (87 aa).

Residues 1 to 26 (MANIKSAKKRAVQSEKARKHNASRRS) are disordered.

It belongs to the bacterial ribosomal protein bS20 family.

Functionally, binds directly to 16S ribosomal RNA. This is Small ribosomal subunit protein bS20 from Salmonella typhi.